The chain runs to 190 residues: NADH-quinone oxidoreductase subunit B (190 aa).

[4Fe-4S] cluster contacts are provided by cysteine 69, cysteine 70, cysteine 134, and cysteine 164.

The protein belongs to the complex I 20 kDa subunit family. In terms of assembly, NDH-1 is composed of 14 different subunits. Subunits NuoB, C, D, E, F, and G constitute the peripheral sector of the complex. The cofactor is [4Fe-4S] cluster.

It localises to the cell inner membrane. The catalysed reaction is a quinone + NADH + 5 H(+)(in) = a quinol + NAD(+) + 4 H(+)(out). Functionally, NDH-1 shuttles electrons from NADH, via FMN and iron-sulfur (Fe-S) centers, to quinones in the respiratory chain. Couples the redox reaction to proton translocation (for every two electrons transferred, four hydrogen ions are translocated across the cytoplasmic membrane), and thus conserves the redox energy in a proton gradient. This Hyphomonas neptunium (strain ATCC 15444) protein is NADH-quinone oxidoreductase subunit B.